We begin with the raw amino-acid sequence, 905 residues long: Nitrate reductase [NADPH] (905 aa).

Residues 1 to 42 are disordered; sequence METSTTTTLLQQERIPENSEPISTHIHTHSLPPTPPGTAKPS. Residue cysteine 179 coordinates Mo-molybdopterin. The Cytochrome b5 heme-binding domain occupies 546–621; it reads NRKITIEELK…LPTYHIGTLD (76 aa). Heme is bound by residues histidine 581 and histidine 604. Positions 648-759 constitute an FAD-binding FR-type domain; the sequence is KTWSKAILDK…KGPTGKFVYH (112 aa). Residues 702 to 705, 719 to 723, 733 to 735, serine 783, and threonine 786 contribute to the FAD site; these read RSYT, LIKIY, and VMT. 875 to 884 is an NADP(+) binding site; the sequence is LLLVCGPPPM.

This sequence belongs to the nitrate reductase family. In terms of assembly, homodimer. Requires FAD as cofactor. It depends on heme as a cofactor. Mo-molybdopterin serves as cofactor.

It carries out the reaction nitrite + NADP(+) + H2O = nitrate + NADPH + H(+). Its function is as follows. Nitrate reductase is a key enzyme involved in the first step of nitrate assimilation in plants, fungi and bacteria. This is Nitrate reductase [NADPH] (NIA) from Fusarium oxysporum (Fusarium vascular wilt).